The following is a 360-amino-acid chain: UDP-3-O-acylglucosamine N-acyltransferase (360 aa).

The Proton acceptor role is filled by histidine 256. A disordered region spans residues 341–360 (EGSGAETAARPDDDRDEGRG). The segment covering 349-360 (ARPDDDRDEGRG) has biased composition (basic and acidic residues).

The protein belongs to the transferase hexapeptide repeat family. LpxD subfamily. Homotrimer.

It catalyses the reaction a UDP-3-O-[(3R)-3-hydroxyacyl]-alpha-D-glucosamine + a (3R)-hydroxyacyl-[ACP] = a UDP-2-N,3-O-bis[(3R)-3-hydroxyacyl]-alpha-D-glucosamine + holo-[ACP] + H(+). The protein operates within bacterial outer membrane biogenesis; LPS lipid A biosynthesis. Its function is as follows. Catalyzes the N-acylation of UDP-3-O-acylglucosamine using 3-hydroxyacyl-ACP as the acyl donor. Is involved in the biosynthesis of lipid A, a phosphorylated glycolipid that anchors the lipopolysaccharide to the outer membrane of the cell. This is UDP-3-O-acylglucosamine N-acyltransferase from Rhodopseudomonas palustris (strain ATCC BAA-98 / CGA009).